We begin with the raw amino-acid sequence, 260 residues long: 2-oxo-tetronate isomerase (260 aa).

The active-site Proton donor/acceptor is the glutamate 143. Mg(2+) contacts are provided by glutamate 143, aspartate 178, glutamine 204, and glutamate 240. Glutamate 240 acts as the Proton donor/acceptor in catalysis.

Belongs to the hyi family. OtnI subfamily.

It catalyses the reaction 2-dehydro-L-erythronate = 3-dehydro-L-erythronate. The enzyme catalyses 2-dehydro-D-erythronate = 3-dehydro-D-erythronate. Catalyzes the isomerization of 2-oxo-tetronate to 3-oxo-tetronate. This chain is 2-oxo-tetronate isomerase, found in Cupriavidus necator (strain ATCC 17699 / DSM 428 / KCTC 22496 / NCIMB 10442 / H16 / Stanier 337) (Ralstonia eutropha).